The following is a 400-amino-acid chain: MSDILQELLRVSEKAANIARACRQQETLFQLLIEEKKEGEKNKKFAVDFKTLADVLVQEVIKENMENKFPGLGKKIFGEESNEFTNDLGEKIIMRLGPTEEETVALLSKVLNGNKLASEALAKVVHQDVFFSDPALDSVEINIPQDILGIWVDPIDSTYQYIKGSADITPNQGIFPSGLQCVTVLIGVYDIQTGVPLMGVINQPFVSQDLHTRRWKGQCYWGLSYLGTNIHSLLPPVSTRSNSEAQSQGTQNPSSEGSCRFSVVISTSEKETIKGALSHVCGERIFRAAGAGYKSLCVILGLADIYIFSEDTTFKWDSCAAHAILRAMGGGMVDLKECLERNPDTGLDLPQLVYHVGNEGAAGVDQWANKGGLIAYRSEKQLETFLSRLLQHLAPVATHT.

D54 contributes to the Li(+) binding site. A Mg(2+)-binding site is contributed by E79. E80 contributes to the Li(+) binding site. Residues D153 and I155 each coordinate Mg(2+). Residues D156, S157, and T158 each contribute to the 1D-myo-inositol 1,4-bisphosphate site. Over residues 238–257 (STRSNSEAQSQGTQNPSSEG) the composition is skewed to polar residues. Positions 238-258 (STRSNSEAQSQGTQNPSSEGS) are disordered. Residues S268, K270, G290, A291, K294, and T312 each contribute to the 1D-myo-inositol 1,4-bisphosphate site. Position 317 (D317) interacts with Mg(2+). Phosphoserine is present on S318.

The protein belongs to the inositol monophosphatase superfamily. As to quaternary structure, monomer. Mg(2+) serves as cofactor.

It carries out the reaction 1D-myo-inositol 1,4-bisphosphate + H2O = 1D-myo-inositol 4-phosphate + phosphate. It catalyses the reaction 1D-myo-inositol 1,3,4-trisphosphate + H2O = 1D-myo-inositol 3,4-bisphosphate + phosphate. The protein operates within signal transduction; phosphatidylinositol signaling pathway. With respect to regulation, inhibited by Li(+). Mg(2+)-dependent phosphatase that catalyzes the hydrolysis of the 1-position phosphate from inositol 1,4-bisphosphate and inositol 1,3,4-trisphosphate and participates in inositol phosphate metabolism. The polypeptide is Inositol polyphosphate 1-phosphatase (Bos taurus (Bovine)).